Reading from the N-terminus, the 340-residue chain is Glycerol-3-phosphate dehydrogenase [NAD(P)+] (340 aa).

4 residues coordinate NADPH: S11, W12, R33, and K106. Sn-glycerol 3-phosphate is bound by residues K106, G137, and S139. Residue A141 participates in NADPH binding. Sn-glycerol 3-phosphate-binding residues include K192, D245, S255, R256, and N257. The Proton acceptor role is filled by K192. R256 serves as a coordination point for NADPH. NADPH is bound by residues V280 and E282.

The protein belongs to the NAD-dependent glycerol-3-phosphate dehydrogenase family.

It localises to the cytoplasm. The catalysed reaction is sn-glycerol 3-phosphate + NAD(+) = dihydroxyacetone phosphate + NADH + H(+). It carries out the reaction sn-glycerol 3-phosphate + NADP(+) = dihydroxyacetone phosphate + NADPH + H(+). Its pathway is membrane lipid metabolism; glycerophospholipid metabolism. In terms of biological role, catalyzes the reduction of the glycolytic intermediate dihydroxyacetone phosphate (DHAP) to sn-glycerol 3-phosphate (G3P), the key precursor for phospholipid synthesis. This is Glycerol-3-phosphate dehydrogenase [NAD(P)+] from Bacillus mycoides (strain KBAB4) (Bacillus weihenstephanensis).